The chain runs to 243 residues: Venom nerve growth factor 3 (243 aa).

The N-terminal stretch at 1-18 (MSMLCYTLIIAFLIGIWA) is a signal peptide. A propeptide spanning residues 19–125 (APKSEDNVPL…ALNRNIRAKR (107 aa)) is cleaved from the precursor. A compositionally biased stretch (basic and acidic residues) spans 47–66 (GLKTSRNTDQRHPAPKKAED). Residues 47–67 (GLKTSRNTDQRHPAPKKAEDQ) form a disordered region. 3 disulfide bridges follow: cysteine 139–cysteine 204, cysteine 182–cysteine 232, and cysteine 192–cysteine 234. Asparagine 148 and asparagine 151 each carry an N-linked (GlcNAc...) asparagine glycan.

Belongs to the NGF-beta family. In terms of assembly, homodimer; non-covalently linked. In terms of tissue distribution, expressed by the venom gland.

The protein localises to the secreted. Its function is as follows. Nerve growth factor is important for the development and maintenance of the sympathetic and sensory nervous systems. It stimulates division and differentiation of sympathetic and embryonic sensory neurons as well as basal forebrain cholinergic neurons in the brain. Its relevance in the snake venom is not clear. However, it has been shown to inhibit metalloproteinase-dependent proteolysis of platelet glycoprotein Ib alpha, suggesting a metalloproteinase inhibition to prevent metalloprotease autodigestion and/or protection against prey proteases. Binds a lipid between the two protein chains in the homodimer. The lipid-bound form promotes histamine relase from mouse mast cells, contrary to the lipid-free form. The polypeptide is Venom nerve growth factor 3 (Tropidechis carinatus (Australian rough-scaled snake)).